The chain runs to 220 residues: Uracil-DNA glycosylase (220 aa).

The active-site Proton acceptor is the aspartate 65.

It belongs to the uracil-DNA glycosylase (UDG) superfamily. UNG family.

The protein resides in the cytoplasm. The enzyme catalyses Hydrolyzes single-stranded DNA or mismatched double-stranded DNA and polynucleotides, releasing free uracil.. Its function is as follows. Excises uracil residues from the DNA which can arise as a result of misincorporation of dUMP residues by DNA polymerase or due to deamination of cytosine. The polypeptide is Uracil-DNA glycosylase (Phocaeicola vulgatus (strain ATCC 8482 / DSM 1447 / JCM 5826 / CCUG 4940 / NBRC 14291 / NCTC 11154) (Bacteroides vulgatus)).